The following is a 208-amino-acid chain: Protein GrpE (208 aa).

Basic and acidic residues predominate over residues 1–12; that stretch reads MTNKDESVEKNT. A disordered region spans residues 1–59; it reads MTNKDESVEKNTESTVEETNIKQNIDDSVEQAEESKGHLQDEAIEETSDENVIEEIDPK. Residues 13 to 23 show a composition bias toward polar residues; the sequence is ESTVEETNIKQ. Acidic residues predominate over residues 42-55; that stretch reads EAIEETSDENVIEE.

The protein belongs to the GrpE family. As to quaternary structure, homodimer.

Its subcellular location is the cytoplasm. Its function is as follows. Participates actively in the response to hyperosmotic and heat shock by preventing the aggregation of stress-denatured proteins, in association with DnaK and GrpE. It is the nucleotide exchange factor for DnaK and may function as a thermosensor. Unfolded proteins bind initially to DnaJ; upon interaction with the DnaJ-bound protein, DnaK hydrolyzes its bound ATP, resulting in the formation of a stable complex. GrpE releases ADP from DnaK; ATP binding to DnaK triggers the release of the substrate protein, thus completing the reaction cycle. Several rounds of ATP-dependent interactions between DnaJ, DnaK and GrpE are required for fully efficient folding. The sequence is that of Protein GrpE from Staphylococcus aureus (strain Mu3 / ATCC 700698).